The primary structure comprises 343 residues: Follistatin (343 aa).

The signal sequence occupies residues 1–28 (MLNQRIHPGMLVLLMFLYHFMEDHTAQA). One can recognise a TB domain in the interval 29–102 (GNCWLRQARN…TCENVDCGPG (74 aa)). Disulfide bonds link C31/C54, C41/C87, C55/C90, C94/C105, C99/C115, C117/C149, C121/C142, and C131/C163. The 24-residue stretch at 93–116 (TCENVDCGPGKKCKMNKKNKPRCV) folds into the Follistatin-like 1 domain. Kazal-like domains follow at residues 99–165 (CGPG…KCKK), 185–240 (NAYC…KCIK), and 263–317 (RGRC…SCNS). N123 is a glycosylation site (N-linked (GlcNAc...) asparagine). The Follistatin-like 2 domain occupies 166–189 (TCRDVLCPGSSTCVVDQTNNAYCV). Cystine bridges form between C191-C224, C195-C217, and C206-C238. Positions 243–267 (SCEDIQCSAGKKCLWDFKVGRGRCA) constitute a Follistatin-like 3 domain. 3 disulfides stabilise this stretch: C269/C301, C273/C294, and C283/C315. The N-linked (GlcNAc...) asparagine glycan is linked to N287. A disordered region spans residues 315-343 (CNSINEDPEEEEEDEDQDYSFPISSILEW). Positions 320–332 (EDPEEEEEDEDQD) are enriched in acidic residues.

Monomer. Ciliary ganglion neurons. Levels are higher in the iris than the choroid.

It localises to the secreted. Functionally, binds directly to activin and functions as an activin antagonist. Inhibits activin A signaling in the iris and regulates somatostatin phenotype in ciliary ganglion neurons. Specific inhibitor of the biosynthesis and secretion of pituitary follicle stimulating hormone (FSH). This is Follistatin (FST) from Gallus gallus (Chicken).